The sequence spans 325 residues: MSSVETAGKRPAKVEAGVKLRGAEKVARIPVKIIPTDELPKKPDWIRVRIPVSPEVDQIKQTLRKHKLHSVCEEASCPNLGECFSSGTATFMIMGDICTRRCPFCDVGHGRPNALDPDEPKNLAQAIADMRLKYVVITSVDRDDLRDGGAQHFADCLREIRKLSPSIQLETLVPDYRGRMEIALDITATEPPDVFNHNLETVPRLYKSSRPGSDFEWSLDLLEKFKQRVPGVPTKSGLMLGLGETDEEVIEVMQRMREHDIDMLTLGQYLQPSRNHLPVQRFVHPDTFAWFAEEGMKMGFKNVASGPLVRSSYHADQQAHGAKHD.

[4Fe-4S] cluster contacts are provided by C72, C77, C83, C98, C102, C105, and S312. The region spanning 84–301 (FSSGTATFMI…AEEGMKMGFK (218 aa)) is the Radical SAM core domain.

Belongs to the radical SAM superfamily. Lipoyl synthase family. The cofactor is [4Fe-4S] cluster.

The protein localises to the cytoplasm. The enzyme catalyses [[Fe-S] cluster scaffold protein carrying a second [4Fe-4S](2+) cluster] + N(6)-octanoyl-L-lysyl-[protein] + 2 oxidized [2Fe-2S]-[ferredoxin] + 2 S-adenosyl-L-methionine + 4 H(+) = [[Fe-S] cluster scaffold protein] + N(6)-[(R)-dihydrolipoyl]-L-lysyl-[protein] + 4 Fe(3+) + 2 hydrogen sulfide + 2 5'-deoxyadenosine + 2 L-methionine + 2 reduced [2Fe-2S]-[ferredoxin]. It functions in the pathway protein modification; protein lipoylation via endogenous pathway; protein N(6)-(lipoyl)lysine from octanoyl-[acyl-carrier-protein]: step 2/2. In terms of biological role, catalyzes the radical-mediated insertion of two sulfur atoms into the C-6 and C-8 positions of the octanoyl moiety bound to the lipoyl domains of lipoate-dependent enzymes, thereby converting the octanoylated domains into lipoylated derivatives. This chain is Lipoyl synthase, found in Stutzerimonas stutzeri (strain A1501) (Pseudomonas stutzeri).